The primary structure comprises 1035 residues: Potassium-transporting ATPase alpha chain 1 (1035 aa).

The tract at residues 1–41 (MGKAENYELYSVELGPGPGGDMAAKMSKKKKAGGGGGKRKE) is disordered. The Cytoplasmic segment spans residues 1–98 (MGKAENYELY…NALRPPRGTP (98 aa)). A phosphotyrosine mark is found at Tyr-7 and Tyr-10. Over residues 26 to 40 (MSKKKKAGGGGGKRK) the composition is skewed to basic residues. Ser-27 carries the post-translational modification Phosphoserine. A helical transmembrane segment spans residues 99–119 (EYVKFARQLAGGLQCLMWVAA). Topologically, residues 120–142 (AICLIAFAIQASEGDLTTDDNLY) are lumenal. A helical transmembrane segment spans residues 143–163 (LAIALIAVVVVTGCFGYYQEF). Residues 164–299 (KSTNIIASFK…NEKTPIAIEI (136 aa)) are Cytoplasmic-facing. Residues 300-319 (EHFVDIIAGLAILFGATFFI) traverse the membrane as a helical segment. Residues 320 to 331 (VAMCIGYTFLRA) lie on the Lumenal side of the membrane. The helical transmembrane segment at 332-349 (MVFFMAIVVAYVPEGLLA) threads the bilayer. K(+) contacts are provided by Val-340, Ala-341, Val-343, and Glu-345. The Cytoplasmic portion of the chain corresponds to 350 to 783 (TVTVCLSLTA…EQGRLIFDNL (434 aa)). The 4-aspartylphosphate intermediate role is filled by Asp-387. Mg(2+)-binding residues include Asp-387 and Thr-389. A phosphoserine mark is found at Ser-463 and Ser-601. The Mg(2+) site is built by Asp-728 and Asp-732. The chain crosses the membrane as a helical span at residues 784–803 (KKSIAYTLTKNIPELTPYLI). A K(+)-binding site is contributed by Glu-797. Over 804-813 (YITVSVPLPL) the chain is Lumenal. Residues 814–834 (GCITILFIELCTDIFPSVSLA) form a helical membrane-spanning segment. Glu-822 contacts K(+). Residues 835–854 (YEKAESDIMHLRPRNPKRDR) lie on the Cytoplasmic side of the membrane. Phosphoserine is present on Ser-840. Residues 855–877 (LVNEPLAAYSYFQIGAIQSFAGF) form a helical membrane-spanning segment. Residues 878–929 (TDYFTAMAQEGWFPLLCVGLRAQWEDHHLQDLQDSYGQEWTFGQRLYQQYTC) lie on the Lumenal side of the membrane. Residues 930-949 (YTVFFISIEVCQIADVLIRK) form a helical membrane-spanning segment. Over 950–963 (TRRLSAFQQGFFRN) the chain is Cytoplasmic. A Phosphoserine; by PKA modification is found at Ser-954. Residues 964–982 (KILVIAIVFQVCIGCFLCY) traverse the membrane as a helical segment. Over 983-997 (CPGMPNIFNFMPIRF) the chain is Lumenal. A helical membrane pass occupies residues 998-1018 (QWWLVPLPYGILIFVYDEIRK). The Cytoplasmic portion of the chain corresponds to 1019–1035 (LGVRCCPGSWWDQELYY).

This sequence belongs to the cation transport ATPase (P-type) (TC 3.A.3) family. Type IIC subfamily. The gastric H(+)/K(+) ATPase pump is composed of the catalytic alpha subunit ATP4A and the regulatory beta subunit ATP4B. Interacts (via the P-domain) with ATP4B (via N-terminus); this interaction stabilizes the lumenal-open E2 conformation state and prevents the reverse reaction of the transport cycle. In terms of tissue distribution, expressed in gastric parietal cells (at protein level).

Its subcellular location is the apical cell membrane. The catalysed reaction is K(+)(out) + ATP + H2O + H(+)(in) = K(+)(in) + ADP + phosphate + 2 H(+)(out). In terms of biological role, the catalytic subunit of the gastric H(+)/K(+) ATPase pump which transports H(+) ions in exchange for K(+) ions across the apical membrane of parietal cells. Uses ATP as an energy source to pump H(+) ions to the gastric lumen while transporting K(+) ion from the lumen into the cell. Remarkably generates a million-fold proton gradient across the gastric parietal cell membrane, acidifying the gastric juice down to pH 1. Within a transport cycle, the transfer of a H(+) ion across the membrane is coupled to ATP hydrolysis and is associated with a transient phosphorylation that shifts the pump conformation from inward-facing (E1) to outward-facing state (E2). The release of the H(+) ion in the stomach lumen is followed by binding of K(+) ion converting the pump conformation back to the E1 state. The protein is Potassium-transporting ATPase alpha chain 1 of Homo sapiens (Human).